The following is a 418-amino-acid chain: L-methionine/branched-chain amino acid exporter YjeH (418 aa).

Residues 1–15 (MSGLKQELGLAQGIG) are Periplasmic-facing. A helical transmembrane segment spans residues 16–36 (LLSTSLLGTGVFAVPALAALV). Over 37–41 (AGNNS) the chain is Cytoplasmic. The chain crosses the membrane as a helical span at residues 42 to 62 (LWAWPVLIILVFPIAIVFAIL). The Periplasmic portion of the chain corresponds to 63–89 (GRHYPSAGGVAHFVGMAFGSRLERVTG). Residues 90-110 (WLFLSVIPVGLPAALQIAAGF) form a helical membrane-spanning segment. Residues 111-113 (GQA) are Cytoplasmic-facing. A helical transmembrane segment spans residues 114-134 (MFGWHSWQLLLAELGTLALVW). The Periplasmic segment spans residues 135 to 147 (YIGTRGASSSANL). The chain crosses the membrane as a helical span at residues 148 to 168 (QTVIAGLIVALIVAIWWAGDI). The Cytoplasmic segment spans residues 169–182 (KPANIPFPAPGNIE). A helical transmembrane segment spans residues 183–203 (LTGLFAALSVMFWCFVGLEAF). Over 204–219 (AHLASEFKNPERDFPR) the chain is Periplasmic. The helical transmembrane segment at 220–240 (ALMIGLLLAGLVYWGCTVVVL) threads the bilayer. The Cytoplasmic segment spans residues 241–257 (HFDAYGEKMAAAASLPK). Residues 258 to 278 (IVVQLFGVGALWIACVIGYLA) traverse the membrane as a helical segment. Residues 279 to 317 (CFASLNIYIQSFARLVWSQAQHNPDHYLARLSSRHIPNN) lie on the Periplasmic side of the membrane. Residues 318 to 338 (ALNAVLGCCVVSTLVIHALEI) traverse the membrane as a helical segment. Topologically, residues 339 to 341 (NLD) are cytoplasmic. A helical membrane pass occupies residues 342 to 362 (ALIIYANGIFIMIYLLCMLAG). The Periplasmic segment spans residues 363 to 378 (CKLLQGRYRLLAVVGG). The helical transmembrane segment at 379 to 399 (LLCVLLLAMVGWKSLYALIML) threads the bilayer. Topologically, residues 400–418 (AGLWLLLPKRKTPENGITT) are cytoplasmic.

The protein belongs to the amino acid-polyamine-organocation (APC) superfamily. Amino acid efflux (AAE) (TC 2.A.3.13) family.

The protein resides in the cell inner membrane. It catalyses the reaction L-methionine(in) + H(+)(out) = L-methionine(out) + H(+)(in). The enzyme catalyses L-leucine(in) + H(+)(out) = L-leucine(out) + H(+)(in). The catalysed reaction is L-isoleucine(in) + H(+)(out) = L-isoleucine(out) + H(+)(in). It carries out the reaction L-valine(in) + H(+)(out) = L-valine(out) + H(+)(in). Its activity is regulated as follows. Efflux of L-methionine is inhibited by the proton ionophore carbonyl cyanide m-chlorophenylhydrazone (CCCP). Its function is as follows. Catalyzes the efflux of L-methionine, L-leucine, L-isoleucine and L-valine. Activity is dependent on electrochemical potential. The chain is L-methionine/branched-chain amino acid exporter YjeH (yjeH) from Escherichia coli (strain K12).